Consider the following 404-residue polypeptide: tRNA pseudouridine(31) synthase (404 aa).

The active site involves Asp168.

Belongs to the pseudouridine synthase RluA family.

It localises to the cytoplasm. The protein localises to the mitochondrion. The enzyme catalyses uridine(31) in tRNA = pseudouridine(31) in tRNA. Catalyzes the formation of pseudouridine at position 31 in the psi GC loop of tRNAS. This chain is tRNA pseudouridine(31) synthase (PUS6), found in Saccharomyces cerevisiae (strain ATCC 204508 / S288c) (Baker's yeast).